Reading from the N-terminus, the 547-residue chain is Chaperonin GroEL (547 aa).

Residues 30–33 (TLGP), K51, 87–91 (DGTTT), G415, and D495 each bind ATP.

Belongs to the chaperonin (HSP60) family. In terms of assembly, forms a cylinder of 14 subunits composed of two heptameric rings stacked back-to-back. Interacts with the co-chaperonin GroES.

It is found in the cytoplasm. The catalysed reaction is ATP + H2O + a folded polypeptide = ADP + phosphate + an unfolded polypeptide.. Functionally, together with its co-chaperonin GroES, plays an essential role in assisting protein folding. The GroEL-GroES system forms a nano-cage that allows encapsulation of the non-native substrate proteins and provides a physical environment optimized to promote and accelerate protein folding. In Shewanella pealeana (strain ATCC 700345 / ANG-SQ1), this protein is Chaperonin GroEL.